The primary structure comprises 98 residues: NADH-ubiquinone oxidoreductase chain 4L (98 aa).

3 consecutive transmembrane segments (helical) span residues 1-21 (MPST…GLLL), 29-49 (SLLC…LMAL), and 61-81 (IVLM…LVMV).

It belongs to the complex I subunit 4L family. In terms of assembly, core subunit of respiratory chain NADH dehydrogenase (Complex I) which is composed of 45 different subunits.

Its subcellular location is the mitochondrion inner membrane. It carries out the reaction a ubiquinone + NADH + 5 H(+)(in) = a ubiquinol + NAD(+) + 4 H(+)(out). Its function is as follows. Core subunit of the mitochondrial membrane respiratory chain NADH dehydrogenase (Complex I) which catalyzes electron transfer from NADH through the respiratory chain, using ubiquinone as an electron acceptor. Part of the enzyme membrane arm which is embedded in the lipid bilayer and involved in proton translocation. In Choloepus didactylus (Southern two-toed sloth), this protein is NADH-ubiquinone oxidoreductase chain 4L (MT-ND4L).